Consider the following 424-residue polypeptide: Calreticulin (424 aa).

Positions 1-19 are cleaved as a signal peptide; sequence MRLLLCLIFLVFVFNFALS. Cys-105 and Cys-137 are joined by a disulfide. Tyr-109, Lys-111, Tyr-128, and Asp-135 together coordinate an alpha-D-glucoside. 7 consecutive repeat copies span residues 191 to 202, 210 to 221, 227 to 238, 246 to 256, 260 to 270, 274 to 284, and 288 to 298. Positions 191–256 are 4 X 12 AA approximate repeats; it reads IQAGNLADDW…EAVKPEDWNE (66 aa). The 3 X 11 AA approximate repeats stretch occupies residues 260 to 298; it reads GEWEAPTIANPEYKGEWKAKKIPNPEYKGEWVHPLIDNP. Position 318 (Glu-318) interacts with an alpha-D-glucoside. A compositionally biased stretch (basic and acidic residues) spans 370 to 385; sequence RKKADEKLAAEKAAEK. The disordered stretch occupies residues 370-424; the sequence is RKKADEKLAAEKAAEKEAEEADEEEEEVAEEDLVKTDDKKEEVKKSTKKVDHDEL. Residues 386–400 are compositionally biased toward acidic residues; sequence EAEEADEEEEEVAEE. The segment covering 401 to 424 has biased composition (basic and acidic residues); sequence DLVKTDDKKEEVKKSTKKVDHDEL. The Prevents secretion from ER motif lies at 421 to 424; the sequence is HDEL.

Belongs to the calreticulin family.

It is found in the endoplasmic reticulum lumen. In terms of biological role, molecular calcium-binding chaperone promoting folding, oligomeric assembly and quality control in the ER via the calreticulin/calnexin cycle. This lectin may interact transiently with almost all of the monoglucosylated glycoproteins that are synthesized in the ER. This Dictyostelium discoideum (Social amoeba) protein is Calreticulin (crtA).